Here is a 546-residue protein sequence, read N- to C-terminus: Beta-amylase (546 aa).

The first 30 residues, 1–30 (MKNQFQYCCIVILSVVMLFVSLLIPQASSA), serve as a signal peptide directing secretion. Position 79 (D79) interacts with substrate. The Ca(2+) site is built by E86, D90, and Q91. Substrate contacts are provided by H119 and D127. A disulfide bridge connects residues C121 and C129. The Ca(2+) site is built by E171 and E174. E202 acts as the Proton donor in catalysis. K317, H322, and T360 together coordinate substrate. E397 serves as the catalytic Proton acceptor. Substrate is bound by residues 398–399 (NA) and R427. Residues 444-546 (LLGVTPVMQT…LKTTSHTSSW (103 aa)) enclose the CBM20 domain.

The protein belongs to the glycosyl hydrolase 14 family. As to quaternary structure, monomer. Requires Ca(2+) as cofactor.

The catalysed reaction is Hydrolysis of (1-&gt;4)-alpha-D-glucosidic linkages in polysaccharides so as to remove successive maltose units from the non-reducing ends of the chains.. In Bacillus cereus, this protein is Beta-amylase (spoII).